A 376-amino-acid chain; its full sequence is MAESESPAIVIDNGSGMCKAGIAGDDAPRAAFPSIVGRPKMPGIMVGMDQKECYVGEEAQAKRGVLNLKYPIEHGIVTDYDDMEKIWHHCFYNELRVTPEEHPCLLTEAPQNPKLNREKMTKTMFETFNVPSFYVAIQAVLSLYASGRTTGIVVDSGDGVTHTVPIYEGYALPHAILRIDLAGRELTEYCMKLLYEIGLNFSSTAEREIIRDIKEKLCYVAIDYEAELKAYKESSQNDKSYELPDGNTITVQDQRFRCPELLFKPAFIGKEFPGIHELTFNSIMKCDVDVRKDPYNNIVLSGGTTMFPGIAERLSKEVSALAPSSMKIKVVAPPERRYSVWIGGSILSSLSTFQTMWITKAEYDESGPSIVHRKCF.

Belongs to the actin family.

Its subcellular location is the cytoplasm. The protein resides in the cytoskeleton. It catalyses the reaction ATP + H2O = ADP + phosphate + H(+). In terms of biological role, actins are highly conserved proteins that are involved in various types of cell motility and are ubiquitously expressed in all eukaryotic cells. The protein is Actin, macronuclear of Tetrahymena thermophila.